Here is a 315-residue protein sequence, read N- to C-terminus: Phosphatidylglycerol--prolipoprotein diacylglyceryl transferase (315 aa).

2 helical membrane passes run 19–39 (FTIHMYAICILIGICVAVWIL) and 93–113 (VWEGGMAIFGGISVGTLVAFL). Residue Arg-141 participates in a 1,2-diacyl-sn-glycero-3-phospho-(1'-sn-glycerol) binding. Transmembrane regions (helical) follow at residues 188-208 (LFHPTFLYEMIWNLIGAALII) and 256-276 (VWTAIIVFVLGCILFVVLYQY).

It belongs to the Lgt family.

It localises to the cell membrane. The enzyme catalyses L-cysteinyl-[prolipoprotein] + a 1,2-diacyl-sn-glycero-3-phospho-(1'-sn-glycerol) = an S-1,2-diacyl-sn-glyceryl-L-cysteinyl-[prolipoprotein] + sn-glycerol 1-phosphate + H(+). The protein operates within protein modification; lipoprotein biosynthesis (diacylglyceryl transfer). Its function is as follows. Catalyzes the transfer of the diacylglyceryl group from phosphatidylglycerol to the sulfhydryl group of the N-terminal cysteine of a prolipoprotein, the first step in the formation of mature lipoproteins. The polypeptide is Phosphatidylglycerol--prolipoprotein diacylglyceryl transferase (Bifidobacterium longum (strain NCC 2705)).